The sequence spans 241 residues: tRNA pseudouridine synthase B (241 aa).

Residue aspartate 52 is the Nucleophile of the active site.

The protein belongs to the pseudouridine synthase TruB family. Type 1 subfamily.

The enzyme catalyses uridine(55) in tRNA = pseudouridine(55) in tRNA. Responsible for synthesis of pseudouridine from uracil-55 in the psi GC loop of transfer RNAs. This chain is tRNA pseudouridine synthase B, found in Chloroherpeton thalassium (strain ATCC 35110 / GB-78).